The following is a 130-amino-acid chain: Small ribosomal subunit protein uS9 (130 aa).

Belongs to the universal ribosomal protein uS9 family.

The protein is Small ribosomal subunit protein uS9 of Burkholderia pseudomallei (strain K96243).